The primary structure comprises 290 residues: MKGIYSALMVPYNEDGSINEKGLREIIRYNIDKMKVDGLYVGGSTGENFMISTEEKKRVFEIAIDEAKDSVNLIAQVGSINLNEAVELGKYVTKLGYKCLSAVTPFYYKFDFSEIKDYYETIVRETGNYMIIYSIPFLTGVNMSLSQFGELFENEKIIGVKFTAGDFYLLERVRKAFPDKLIFAGFDEMLLPATVLGVDGAIGSTYNINGIRAKQIFELAKNSKIDEALKIQHTTNDLIEGILSNGLYQTIKEILKLEGVDAGYCRKPMKKISQKQIEFAKELHKKFLKN.

Positions 44 and 45 each coordinate aceneuramate. The Proton donor role is filled by Tyr-133. The active-site Schiff-base intermediate with substrate is Lys-161. Aceneuramate is bound by residues Thr-163, Gly-185, Asp-187, Glu-188, and Ser-204.

This sequence belongs to the DapA family. NanA subfamily. As to quaternary structure, homotetramer.

It localises to the cytoplasm. It catalyses the reaction aceneuramate = aldehydo-N-acetyl-D-mannosamine + pyruvate. The protein operates within amino-sugar metabolism; N-acetylneuraminate degradation; D-fructose 6-phosphate from N-acetylneuraminate: step 1/5. Its function is as follows. Catalyzes the reversible aldol cleavage of N-acetylneuraminic acid (sialic acid; Neu5Ac) to form pyruvate and N-acetylmannosamine (ManNAc) via a Schiff base intermediate. The polypeptide is N-acetylneuraminate lyase (Fusobacterium nucleatum subsp. nucleatum (strain ATCC 25586 / DSM 15643 / BCRC 10681 / CIP 101130 / JCM 8532 / KCTC 2640 / LMG 13131 / VPI 4355)).